We begin with the raw amino-acid sequence, 318 residues long: NADH-ubiquinone oxidoreductase chain 1 (318 aa).

9 helical membrane passes run 2–22, 37–57, 69–89, 100–120, 136–156, 171–191, 206–226, 253–273, and 294–314; these read FLMN…FLTL, PNIV…KLFI, LMFT…WIPM, LGVL…LWSG, VAQT…TMMM, HMWL…STLA, ELVS…FFMA, ELFT…FLWI, and LPLT…SAGI.

It belongs to the complex I subunit 1 family.

It localises to the mitochondrion inner membrane. It carries out the reaction a ubiquinone + NADH + 5 H(+)(in) = a ubiquinol + NAD(+) + 4 H(+)(out). Functionally, core subunit of the mitochondrial membrane respiratory chain NADH dehydrogenase (Complex I) that is believed to belong to the minimal assembly required for catalysis. Complex I functions in the transfer of electrons from NADH to the respiratory chain. The immediate electron acceptor for the enzyme is believed to be ubiquinone. This Tolypeutes matacus (Southern three-banded armadillo) protein is NADH-ubiquinone oxidoreductase chain 1 (MT-ND1).